The chain runs to 138 residues: Small ribosomal subunit protein uS11c (138 aa).

A disordered region spans residues 1–23 (MAKPILRIGSRKNTRSGSRKNVR). Basic residues predominate over residues 9–23 (GSRKNTRSGSRKNVR).

It belongs to the universal ribosomal protein uS11 family. As to quaternary structure, part of the 30S ribosomal subunit.

The protein localises to the plastid. It is found in the chloroplast. The polypeptide is Small ribosomal subunit protein uS11c (Crucihimalaya wallichii (Rock-cress)).